Reading from the N-terminus, the 243-residue chain is 1-(5-phosphoribosyl)-5-[(5-phosphoribosylamino)methylideneamino] imidazole-4-carboxamide isomerase (243 aa).

Asp-8 (proton acceptor) is an active-site residue. Catalysis depends on Asp-129, which acts as the Proton donor.

The protein belongs to the HisA/HisF family.

The protein resides in the cytoplasm. The catalysed reaction is 1-(5-phospho-beta-D-ribosyl)-5-[(5-phospho-beta-D-ribosylamino)methylideneamino]imidazole-4-carboxamide = 5-[(5-phospho-1-deoxy-D-ribulos-1-ylimino)methylamino]-1-(5-phospho-beta-D-ribosyl)imidazole-4-carboxamide. Its pathway is amino-acid biosynthesis; L-histidine biosynthesis; L-histidine from 5-phospho-alpha-D-ribose 1-diphosphate: step 4/9. This chain is 1-(5-phosphoribosyl)-5-[(5-phosphoribosylamino)methylideneamino] imidazole-4-carboxamide isomerase, found in Nitratidesulfovibrio vulgaris (strain DSM 19637 / Miyazaki F) (Desulfovibrio vulgaris).